Reading from the N-terminus, the 186-residue chain is ADP-ribosylation factor-like protein 8A (186 aa).

Positions 1 to 19 (MLALFNKLLDWFRALFWKE) form an intramembrane region, note=Mediates targeting to membranes. GTP contacts are provided by residues 29-35 (QYSGKTT), 71-75 (DIGGQ), and 130-133 (NKRD).

It belongs to the small GTPase superfamily. Arf family.

It localises to the late endosome membrane. The protein resides in the lysosome membrane. Its subcellular location is the cytoplasm. The protein localises to the cytoskeleton. It is found in the spindle. It localises to the cell projection. The protein resides in the axon. Its subcellular location is the synapse. Its function is as follows. Plays a role in lysosome motility. In neurons, mediates the anterograde axonal long-range transport of presynaptic lysosome-related vesicles required for presynaptic biogenesis and synaptic function. May play a role in chromosome segregation. The chain is ADP-ribosylation factor-like protein 8A (ARL8A) from Gallus gallus (Chicken).